The following is a 189-amino-acid chain: Probable nicotinate-nucleotide adenylyltransferase (189 aa).

It belongs to the NadD family.

The catalysed reaction is nicotinate beta-D-ribonucleotide + ATP + H(+) = deamido-NAD(+) + diphosphate. It participates in cofactor biosynthesis; NAD(+) biosynthesis; deamido-NAD(+) from nicotinate D-ribonucleotide: step 1/1. In terms of biological role, catalyzes the reversible adenylation of nicotinate mononucleotide (NaMN) to nicotinic acid adenine dinucleotide (NaAD). The protein is Probable nicotinate-nucleotide adenylyltransferase of Bacillus cytotoxicus (strain DSM 22905 / CIP 110041 / 391-98 / NVH 391-98).